The following is a 435-amino-acid chain: Trigger factor (435 aa).

Positions Gly163–Pro248 constitute a PPIase FKBP-type domain.

Belongs to the FKBP-type PPIase family. Tig subfamily.

Its subcellular location is the cytoplasm. The enzyme catalyses [protein]-peptidylproline (omega=180) = [protein]-peptidylproline (omega=0). Involved in protein export. Acts as a chaperone by maintaining the newly synthesized protein in an open conformation. Functions as a peptidyl-prolyl cis-trans isomerase. In Pediococcus pentosaceus (strain ATCC 25745 / CCUG 21536 / LMG 10740 / 183-1w), this protein is Trigger factor.